The chain runs to 459 residues: Protein ABHD15 (459 aa).

An N-terminal signal peptide occupies residues 1–28; sequence MPPWAAALALLLAALALLLLRPWKRAVG. Catalysis depends on charge relay system residues D351 and H382. S425 carries the phosphoserine modification.

The protein belongs to the AB hydrolase superfamily. AB hydrolase 4 family. As to quaternary structure, interacts with PDE3B; this interaction regulates PDE3B's stability and expression and, thereby, impacts the antilipolytic action of insulin. Mainly expressed in adipocytes and adipose depots, followed by a weak expression in liver and pancreas. In white adipose tissue (WAT), only expressed in mature adipocytes and primary adipocytes differentiated from stromal vascular cells (SVCs), but not in undifferentiated SVCs.

The protein localises to the secreted. In terms of biological role, may regulate adipocyte lipolysis and liver lipid accumulation. The chain is Protein ABHD15 from Mus musculus (Mouse).